Consider the following 467-residue polypeptide: Asparagine--tRNA ligase (467 aa).

It belongs to the class-II aminoacyl-tRNA synthetase family. In terms of assembly, homodimer.

Its subcellular location is the cytoplasm. The enzyme catalyses tRNA(Asn) + L-asparagine + ATP = L-asparaginyl-tRNA(Asn) + AMP + diphosphate + H(+). This is Asparagine--tRNA ligase from Glaesserella parasuis serovar 5 (strain SH0165) (Haemophilus parasuis).